An 865-amino-acid polypeptide reads, in one-letter code: Xylosyltransferase 2 (865 aa).

Residues methionine 1–lysine 15 lie on the Cytoplasmic side of the membrane. A helical; Signal-anchor for type II membrane protein membrane pass occupies residues leucine 16–serine 36. The Lumenal segment spans residues glycine 37–arginine 865. The interval aspartate 41–glycine 157 is disordered. Residues arginine 53–aspartate 65 are compositionally biased toward basic and acidic residues. Residues serine 73–arginine 82 show a composition bias toward basic residues. The N-linked (GlcNAc...) asparagine glycan is linked to asparagine 122. Over residues glycine 125–glycine 137 the composition is skewed to low complexity. Intrachain disulfides connect cysteine 162–cysteine 190, cysteine 206–cysteine 448, cysteine 467–cysteine 480, and cysteine 469–cysteine 478. UDP-alpha-D-xylose is bound by residues valine 239, aspartate 267, and threonine 296–tryptophan 298. The N-linked (GlcNAc...) asparagine glycan is linked to asparagine 327. Aspartate 400 to tryptophan 401 is a binding site for UDP-alpha-D-xylose. UDP-alpha-D-xylose-binding positions include serine 481 and arginine 504–lysine 505. Cystine bridges form between cysteine 581-cysteine 833 and cysteine 826-cysteine 839. The N-linked (GlcNAc...) asparagine glycan is linked to asparagine 683. A disordered region spans residues serine 846–arginine 865.

This sequence belongs to the glycosyltransferase 14 family. XylT subfamily. Monomer. Mg(2+) is required as a cofactor. It depends on Mn(2+) as a cofactor. In terms of processing, contains disulfide bonds.

The protein localises to the golgi apparatus membrane. It is found in the secreted. It carries out the reaction UDP-alpha-D-xylose + L-seryl-[protein] = 3-O-(beta-D-xylosyl)-L-seryl-[protein] + UDP + H(+). It functions in the pathway glycan metabolism; chondroitin sulfate biosynthesis. Its pathway is glycan metabolism; heparan sulfate biosynthesis. Its function is as follows. Catalyzes the first step in the biosynthesis of chondroitin sulfate, heparan sulfate and dermatan sulfate proteoglycans, such as DCN. Transfers D-xylose from UDP-D-xylose to specific serine residues of the core protein. The sequence is that of Xylosyltransferase 2 (XYLT2) from Pan troglodytes (Chimpanzee).